The chain runs to 208 residues: DNA-binding protein HupB (208 aa).

The interval 1-90 (MNKAELIDVL…PGAQFKAVIS (90 aa)) is bacterial histone-like domain. An N6-acetyllysine modification is found at Lys-3. Lys-3 carries the N6-acetyllysine; alternate; partial modification. At Lys-3 the chain carries N6-methyllysine; alternate; partial. Lys-72 carries the N6-acetyllysine; partial modification. N6-methyllysine; partial is present on Lys-86. Positions 92–208 (AQKLPADGPA…KKAPAKKGRR (117 aa)) are C-terminus, required for nucleoid localization. 2 positions are modified to N6-acetyllysine; alternate; partial: Lys-94 and Lys-103. 2 positions are modified to N6-methyllysine; alternate; partial: Lys-94 and Lys-103. The interval 96–208 (PADGPAVKRG…KKAPAKKGRR (113 aa)) is disordered. The interval 101–205 (AVKRGVTAGP…AAAKKAPAKK (105 aa)) is degenerate repeats region. The segment covering 113–208 (KAAKKAPAKK…KKAPAKKGRR (96 aa)) has biased composition (basic residues). Residues Lys-116, Lys-136, Lys-149, and Lys-168 each carry the N6-acetyllysine modification.

The protein belongs to the bacterial histone-like protein family. Long actinobacterial subfamily. In terms of assembly, may form oligomers. Interacts with RNase E (rne). In terms of processing, in addition to the identifed modifications, is also methylated on one of Arg-53; Arg-54 or Arg-55.

It is found in the cytoplasm. Its subcellular location is the nucleoid. The protein localises to the secreted. The protein resides in the cell wall. It carries out the reaction 4 Fe(2+) + O2 + 4 H(+) = 4 Fe(3+) + 2 H2O. Trans-stilbene derivative 4,4'-[(E)-ethene-1,2 diylbis({5[(phenylcarbonyl)amino]benzene-2,1-diyl}sulfonylimino)] dibenzoic acid (SD1) inhibits DNA binding at 50 uM. SD1 does not inhibit growth in a range of 3-1600 uM. Its function is as follows. A nucleoid-associated protein (NAP) that plays a crucial role in local chromosome architecture. Helps organize newly replicated oriC proximal regions and contributes to the timing of replication initiation and coordinating replication with chromosome segregation. There are between 30,000-60,000 molecules in a log phase cell; the protein-DNA complex is dynamic during the cell cycle, with more complexes near the cell ends. Binds irregularly along the chromosome with higher binding near the origin of replication (oriC) and lowest binding near the chromosome terminus (ter). Binds DNA non-sequence specifically via both its N- and C-terminal domains with high affinity, has no preference for linear or supercoiled DNA. Binds four-way junction DNA. Represses T7 RNA polymerase in vitro. The C-terminal domain enhances DNA end-joining in vitro in the presence of T4 DNA ligase. RNase E and HupB jointly contribute to cellular adaptation to changing growth conditions and survival during antibiotic treatment. In terms of biological role, has ferroxidase activity, converts Fe(2+) into Fe(3+). Binds Fe(3+) but not Fe(2+); prevents the generation of hydroxyl radicals by the Fenton reaction and thus protects DNA from damage. May function in iron storage. Functionally, plays a role in epigenetic resistance to antibiotics. Growth on levels of isoniazid (INH) near the minimal inhibitory concentration (MIC) kills most bacteria. The surviving cells grow as either large or small colony variants (SCV), evidence suggest SCVs are associated with persistent infections. Mutating this protein leads to specific loss of SCVs. May play a role in cell wall assembly. This is DNA-binding protein HupB from Mycolicibacterium smegmatis (strain ATCC 700084 / mc(2)155) (Mycobacterium smegmatis).